A 211-amino-acid chain; its full sequence is NADH-quinone oxidoreductase subunit A (211 aa).

3 helical membrane passes run 7–27 (WSAL…LVVP), 61–81 (FYLV…LYAY), and 88–108 (VGWI…IGLI).

The protein belongs to the complex I subunit 3 family. As to quaternary structure, NDH-1 is composed of 14 different subunits. Subunits NuoA, H, J, K, L, M, N constitute the membrane sector of the complex.

Its subcellular location is the cell inner membrane. It carries out the reaction a quinone + NADH + 5 H(+)(in) = a quinol + NAD(+) + 4 H(+)(out). Functionally, NDH-1 shuttles electrons from NADH, via FMN and iron-sulfur (Fe-S) centers, to quinones in the respiratory chain. The immediate electron acceptor for the enzyme in this species is believed to be ubiquinone. Couples the redox reaction to proton translocation (for every two electrons transferred, four hydrogen ions are translocated across the cytoplasmic membrane), and thus conserves the redox energy in a proton gradient. This chain is NADH-quinone oxidoreductase subunit A, found in Psychrobacter sp. (strain PRwf-1).